A 24-amino-acid chain; its full sequence is Outer membrane protein (24 aa).

It belongs to the Gram-negative porin family. In terms of assembly, homotrimer.

The protein localises to the cell outer membrane. Its function is as follows. Forms pores that allow passive diffusion of small molecules across the outer membrane. The sequence is that of Outer membrane protein from Sodalis glossinidius.